Reading from the N-terminus, the 328-residue chain is MEGPEAVQRATELIEQRLAQEEETEKLRRSAPGKLSMDMLVLEEEKRLGVQSPALQKVKGQERVRKTSLDLRREIIDVGGIQNLIELRKKRKQKKRDALAAAQEPPPEPEEITGPVNEETFLKAAVEGKMKVIDKYLADGGSADTCDEFRRTALHRASLEGHMEILEKLLENGATVDFQDRLDCTAMHWACRGGHLEVVRLLQSRGADTNVRDKLLSTPLHVAVRTGHVEIVEHFLSLGLDINAKDREGDSALHDAVRLNRYKIIKLLLLHGADMMAKNLAGKTPTDLVQLWQADTRHALEHPEPESEQNGLERPGSGRETPQPIPAQ.

Position 36 is a phosphoserine (Ser36). Position 68 is a phosphoserine; by PKB/AKT2 (Ser68). The interval 96-116 (RDALAAAQEPPPEPEEITGPV) is disordered. ANK repeat units follow at residues 116-145 (VNEE…SADT), 149-178 (FRRT…TVDF), 182-211 (LDCT…DTNV), 215-244 (LLST…DINA), and 248-277 (EGDS…DMMA). A disordered region spans residues 297 to 328 (RHALEHPEPESEQNGLERPGSGRETPQPIPAQ).

Interacts with ID3; both proteins cooperate in myoblast differentiation. Interacts with TTN/titin. Interacts (via ANK repeats) with TCAP; the interaction is direct. Interacts with TJP1 (via PDZ domains). Interacts with PML; the interaction is direct. Interacts with p53/TP53. Interacts with YBX1. Interacts with AKT2. Phosphorylation at Ser-68 by PKB/AKT2 in response to oxidative stress induces translocation to the nucleus and negatively regulates myoblast differentiation. As to expression, expressed by myoblasts (at protein level). Expressed in skeletal and cardiac muscles.

The protein resides in the cytoplasm. It localises to the myofibril. Its subcellular location is the sarcomere. It is found in the i band. The protein localises to the cytosol. The protein resides in the nucleus. It localises to the PML body. Functionally, functions as a negative regulator of myocyte differentiation. May interact with both sarcoplasmic structural proteins and nuclear proteins to regulate gene expression during muscle development and in response to muscle stress. This is Ankyrin repeat domain-containing protein 2 (Ankrd2) from Mus musculus (Mouse).